The sequence spans 217 residues: Oxygen regulatory protein NreC (217 aa).

In terms of domain architecture, Response regulatory spans 2–119 (KIVIADDHAV…QLLLAIRTVY (118 aa)). Position 53 is a 4-aspartylphosphate (aspartate 53). In terms of domain architecture, HTH luxR-type spans 148 to 213 (TSDPFKILSK…ELVEYALKKK (66 aa)). Residues 172–191 (NKEIAEKLFVSVKTVEAHKT) constitute a DNA-binding region (H-T-H motif).

In terms of processing, phosphorylated by NreB.

The protein localises to the cytoplasm. Member of the two-component regulatory system NreB/NreC involved in the control of dissimilatory nitrate/nitrite reduction in response to oxygen. Phosphorylated NreC binds to a GC-rich palindromic sequence at the promoters of the nitrate (narGHJI) and nitrite (nir) reductase operons, as well as the putative nitrate transporter gene narT, and activates their expression. The protein is Oxygen regulatory protein NreC (nreC) of Staphylococcus aureus (strain bovine RF122 / ET3-1).